We begin with the raw amino-acid sequence, 315 residues long: MSESLRIIFAGTPDFAARHLDALLSSGHNVVGVFTQPDRPAGRGKKLMPSPVKVLAEEKGLPVFQPVSLRPQENQQLVADLQADVMVVVAYGLILPKAVLEMPRLGCINVHGSLLPRWRGAAPIQRSLWAGDAETGVTIMQMDVGLDTGDMLYKLSCPITAEDTSGTLYDKLAELGPQGLITTLKQLADGTAKPEVQDETLVTYAEKLSKEEARIDWSLSAAQLERCIRAFNPWPMSWLEIEGQPVKVWKASVIDTATNAAPGTILEANKQGIQVATGDGILNLLSLQPAGKKAMSAQDLLNSRREWFVPGNRLV.

Residue 113–116 participates in (6S)-5,6,7,8-tetrahydrofolate binding; that stretch reads SLLP.

The protein belongs to the Fmt family.

It carries out the reaction L-methionyl-tRNA(fMet) + (6R)-10-formyltetrahydrofolate = N-formyl-L-methionyl-tRNA(fMet) + (6S)-5,6,7,8-tetrahydrofolate + H(+). Attaches a formyl group to the free amino group of methionyl-tRNA(fMet). The formyl group appears to play a dual role in the initiator identity of N-formylmethionyl-tRNA by promoting its recognition by IF2 and preventing the misappropriation of this tRNA by the elongation apparatus. The sequence is that of Methionyl-tRNA formyltransferase from Escherichia coli O127:H6 (strain E2348/69 / EPEC).